Reading from the N-terminus, the 342-residue chain is Prostasin (342 aa).

The first 29 residues, 1 to 29 (MAPRVGLGLGQLEAVTILLLLGLLQSGIR), serve as a signal peptide directing secretion. Residues 30–32 (ADG) constitute a propeptide, activation peptide. Cystine bridges form between cysteine 37–cysteine 154 and cysteine 70–cysteine 86. Residues 45 to 286 (ITGGGSAKPG…YASWIHHHVA (242 aa)) form the Peptidase S1 domain. Histidine 85 functions as the Charge relay system in the catalytic mechanism. Asparagine 110 carries N-linked (GlcNAc...) asparagine glycosylation. Catalysis depends on aspartate 134, which acts as the Charge relay system. Asparagine 159 carries N-linked (GlcNAc...) asparagine glycosylation. Intrachain disulfides connect cysteine 168–cysteine 244, cysteine 201–cysteine 223, and cysteine 234–cysteine 262. The active-site Charge relay system is serine 238. A helical membrane pass occupies residues 320 to 340 (LLRPVLFLPLGLTLGLLSLWL). The propeptide occupies 323-342 (PVLFLPLGLTLGLLSLWLEH).

The protein belongs to the peptidase S1 family. In terms of assembly, heterodimer of two chains, light and heavy, held by a disulfide bond.

It localises to the cell membrane. The protein localises to the secreted. It is found in the extracellular space. Possesses a trypsin-like cleavage specificity with a preference for poly-basic substrates. Stimulates epithelial sodium channel (ENaC) activity through activating cleavage of the gamma subunits (SCNN1G). The sequence is that of Prostasin (Prss8) from Mus musculus (Mouse).